A 63-amino-acid polypeptide reads, in one-letter code: Large ribosomal subunit protein bL32 (63 aa).

Disordered regions lie at residues Met-1–Pro-25 and Val-42–Asp-63. A compositionally biased stretch (basic residues) spans Lys-7–Ile-20. The span at Ala-54–Asp-63 shows a compositional bias: polar residues.

This sequence belongs to the bacterial ribosomal protein bL32 family.

This chain is Large ribosomal subunit protein bL32, found in Lactobacillus johnsonii (strain CNCM I-12250 / La1 / NCC 533).